We begin with the raw amino-acid sequence, 273 residues long: Putative phosphoenolpyruvate synthase regulatory protein (273 aa).

Position 153–160 (153–160 (GVSRSGKT)) interacts with ADP.

This sequence belongs to the pyruvate, phosphate/water dikinase regulatory protein family. PSRP subfamily.

It catalyses the reaction [pyruvate, water dikinase] + ADP = [pyruvate, water dikinase]-phosphate + AMP + H(+). The catalysed reaction is [pyruvate, water dikinase]-phosphate + phosphate + H(+) = [pyruvate, water dikinase] + diphosphate. Bifunctional serine/threonine kinase and phosphorylase involved in the regulation of the phosphoenolpyruvate synthase (PEPS) by catalyzing its phosphorylation/dephosphorylation. In Polaromonas naphthalenivorans (strain CJ2), this protein is Putative phosphoenolpyruvate synthase regulatory protein.